Reading from the N-terminus, the 470-residue chain is MTGEIISIQVGQCGNQVGKQFWGQLAREHGIGVDGQSLHPEDANVVREDDTNVFFRQNDHNRFTPRALLYDLEPSAIGDVQNCFPGFFNERNVWISKEELGAGNTWSIGYDYGLEKQDEFMNMIDKEIDATGNFEGFQLIHSVAGGTGSGLGSNLLEALSDRYHKKIVSTYSVFPSRESEVVVQPYNTILTLRRLIDNSDASVLFDNDALLNLTARVLRDSNTSYQQTNQLIASVMSSVTNSLRFPSYMYNSLPSIFSTLVPTPELHFLAPSFTPFTSDFVPGAKDFKRLSAYDVILDLFDKNNSMVTRDTDTPVYLAIYDALQGAVEQSDVTRAILKTQQRIKFAPWSPTSLHVNLGRKSPYNSSANSDYVSGMMLANTSSIVSVFQKTVSSFDVIFKRGAFLHKFQNGKMFQHGWDEFLESREVIQGVIDEYIAAEQENYLDDVLEEDGNFVGGDAEMIDIESNDDII.

144–150 serves as a coordination point for GTP; sequence AGGTGSG.

The protein belongs to the tubulin family.

Its subcellular location is the cytoplasm. The protein localises to the cytoskeleton. It localises to the microtubule organizing center. It is found in the spindle pole body. In terms of biological role, tubulin is the major constituent of microtubules. The gamma chain is found at microtubule organizing centers (MTOC) such as the spindle poles or the centrosome, suggesting that it is involved in the minus-end nucleation of microtubule assembly. The polypeptide is Tubulin gamma chain (TUB4) (Eremothecium gossypii (strain ATCC 10895 / CBS 109.51 / FGSC 9923 / NRRL Y-1056) (Yeast)).